The sequence spans 61 residues: Large ribosomal subunit protein bL32 (61 aa).

The segment covering 1 to 19 (MAHPKRRQSKTRTAKRRTH) has biased composition (basic residues). The tract at residues 1–20 (MAHPKRRQSKTRTAKRRTHD) is disordered.

The protein belongs to the bacterial ribosomal protein bL32 family.

The sequence is that of Large ribosomal subunit protein bL32 from Bacteroides fragilis (strain YCH46).